The primary structure comprises 293 residues: 4-hydroxy-tetrahydrodipicolinate synthase (293 aa).

Position 45 (Thr45) interacts with pyruvate. Tyr133 acts as the Proton donor/acceptor in catalysis. Catalysis depends on Lys161, which acts as the Schiff-base intermediate with substrate. Residue Ile203 coordinates pyruvate.

Belongs to the DapA family. As to quaternary structure, homotetramer; dimer of dimers.

The protein localises to the cytoplasm. It carries out the reaction L-aspartate 4-semialdehyde + pyruvate = (2S,4S)-4-hydroxy-2,3,4,5-tetrahydrodipicolinate + H2O + H(+). It functions in the pathway amino-acid biosynthesis; L-lysine biosynthesis via DAP pathway; (S)-tetrahydrodipicolinate from L-aspartate: step 3/4. Catalyzes the condensation of (S)-aspartate-beta-semialdehyde [(S)-ASA] and pyruvate to 4-hydroxy-tetrahydrodipicolinate (HTPA). This chain is 4-hydroxy-tetrahydrodipicolinate synthase, found in Syntrophotalea carbinolica (strain DSM 2380 / NBRC 103641 / GraBd1) (Pelobacter carbinolicus).